A 622-amino-acid polypeptide reads, in one-letter code: Polyamine transporter 3 (622 aa).

The segment covering 1–47 (MNRQESINSFNSDETSSLSDVESQQPQQYIPSESGSKSNMAPNQLKL) has biased composition (polar residues). Residues 1–76 (MNRQESINSF…VPDVNAPQSS (76 aa)) form a disordered region. At 1–182 (MNRQESINSF…WPAWIRWSYT (182 aa)) the chain is on the cytoplasmic side. Ser55 bears the Phosphoserine mark. Thr98 is modified (phosphothreonine). Phosphoserine is present on residues Ser101 and Ser132. The tract at residues 105-152 (TSTAISRTRTRQIDGASSPSSNEDALESDNNEKGKEGDSSGANDEAPD) is disordered. A helical transmembrane segment spans residues 183–203 (VLLSILVICVAYGSACISGGL). Residues 204-215 (GTVEKKYHVGME) lie on the Extracellular side of the membrane. The chain crosses the membrane as a helical span at residues 216-236 (AAILSVSLMVIGFSLGPLIWS). Topologically, residues 237-245 (PVSDLYGRR) are cytoplasmic. Residues 246–266 (VAYFVSMGLYVIFNIPCALAP) form a helical membrane-spanning segment. Over 267-275 (NLGSLLACR) the chain is Extracellular. A helical transmembrane segment spans residues 276 to 296 (FLCGVWSSSGLCLVGGSIADM). Topologically, residues 297 to 305 (FPSETRGKA) are cytoplasmic. Residues 306 to 326 (IAFFAFAPYVGPVVGPLVNGF) traverse the membrane as a helical segment. At 327–335 (ISVSTGRMD) the chain is on the extracellular side. Residues 336–356 (LIFWVNMAFAGVMWIISSAIP) form a helical membrane-spanning segment. Residues 357-416 (ETYAPVILKRKAARLRKETGNPKIMTEQEAQGVSMGEMMRACLLRPLYFSVTEPVLVATC) lie on the Cytoplasmic side of the membrane. Residues 417–437 (FYVCLIYSLLYAFFFAFPVIF) form a helical membrane-spanning segment. Residues 438 to 446 (GELYGYKDN) are Extracellular-facing. The chain crosses the membrane as a helical span at residues 447–467 (LVGLMFIPIVIGALWALATTF). Over 468 to 487 (YCENKYLQIVKQRKPTPEDR) the chain is Cytoplasmic. A helical membrane pass occupies residues 488-508 (LLGAKIGAPFAAIALWILGAT). The Extracellular segment spans residues 509–512 (AYKH). Residues 513–533 (IIWVGPASAGLAFGFGMVLIY) traverse the membrane as a helical segment. Over 534-550 (YSLNNYIIDCYVQYASS) the chain is Cytoplasmic. The helical transmembrane segment at 551-571 (ALATKVFLRSAGGAAFPLFTI) threads the bilayer. Residues 572–583 (QMYHKLNLHWGS) are Extracellular-facing. Residues 584 to 604 (WLLAFISTAMIALPFAFSYWG) traverse the membrane as a helical segment. The Cytoplasmic segment spans residues 605–622 (KGLRHKLSKKDYSIDSIE).

It belongs to the major facilitator superfamily. DHA1 family. Polyamines/proton antiporter (TC 2.A.1.2.16) subfamily.

It localises to the cell membrane. Its function is as follows. Cell membrane polyamine/proton antiporter, involved in the detoxification of excess polyamines in the cytoplasm. Recognizes spermine, but not spermidine. The polypeptide is Polyamine transporter 3 (TPO3) (Saccharomyces cerevisiae (strain ATCC 204508 / S288c) (Baker's yeast)).